A 98-amino-acid polypeptide reads, in one-letter code: Protein translation factor SUI1 homolog (98 aa).

It belongs to the SUI1 family.

This Thermococcus onnurineus (strain NA1) protein is Protein translation factor SUI1 homolog.